We begin with the raw amino-acid sequence, 179 residues long: ATP synthase subunit b, chloroplastic (179 aa).

The chain crosses the membrane as a helical span at residues 28 to 46 (LLNILALVAILVYTGKDFL).

The protein belongs to the ATPase B chain family. As to quaternary structure, F-type ATPases have 2 components, F(1) - the catalytic core - and F(0) - the membrane proton channel. F(1) has five subunits: alpha(3), beta(3), gamma(1), delta(1), epsilon(1). F(0) has four main subunits: a(1), b(1), b'(1) and c(10-14). The alpha and beta chains form an alternating ring which encloses part of the gamma chain. F(1) is attached to F(0) by a central stalk formed by the gamma and epsilon chains, while a peripheral stalk is formed by the delta, b and b' chains.

Its subcellular location is the plastid. The protein resides in the chloroplast thylakoid membrane. In terms of biological role, f(1)F(0) ATP synthase produces ATP from ADP in the presence of a proton or sodium gradient. F-type ATPases consist of two structural domains, F(1) containing the extramembraneous catalytic core and F(0) containing the membrane proton channel, linked together by a central stalk and a peripheral stalk. During catalysis, ATP synthesis in the catalytic domain of F(1) is coupled via a rotary mechanism of the central stalk subunits to proton translocation. Its function is as follows. Component of the F(0) channel, it forms part of the peripheral stalk, linking F(1) to F(0). This Thalassiosira pseudonana (Marine diatom) protein is ATP synthase subunit b, chloroplastic.